The chain runs to 194 residues: Imidazoleglycerol-phosphate dehydratase (194 aa).

This sequence belongs to the imidazoleglycerol-phosphate dehydratase family.

It localises to the cytoplasm. The enzyme catalyses D-erythro-1-(imidazol-4-yl)glycerol 3-phosphate = 3-(imidazol-4-yl)-2-oxopropyl phosphate + H2O. It participates in amino-acid biosynthesis; L-histidine biosynthesis; L-histidine from 5-phospho-alpha-D-ribose 1-diphosphate: step 6/9. This is Imidazoleglycerol-phosphate dehydratase from Bacillus cereus (strain ATCC 14579 / DSM 31 / CCUG 7414 / JCM 2152 / NBRC 15305 / NCIMB 9373 / NCTC 2599 / NRRL B-3711).